A 350-amino-acid polypeptide reads, in one-letter code: MPVLHNRISNDALKAKMLAESEPRTTISFYKYFHIADPKATRDALYQLFTALNVFGRVYLAHEGINAQISVPASNVETFRAQLYAFDPALEGLRLNIALEDDGKSFWVLRMKVRDRIVADGIDDPHFDASNVGEYLQAAEVNAMLDDPDALFIDMRNHYEYEVGHFENALEIPADTFREQLPKAVEMMQAHKDKKIVMYCTGGIRCEKASAWMKHNGFNKVWHIEGGIIEYARKAREQGLPVRFIGKNFVFDERMGERISDEIIAHCHQCGAPCDSHTNCKNDGCHLLFIQCPVCAEKYKGCCSEICCEESALPPEEQRRRRAGRENGNKIFNKSRGRLNTTLGIPDPTE.

The Rhodanese domain occupies 146 to 240 (DDPDALFIDM…YARKAREQGL (95 aa)). The active-site Cysteine persulfide intermediate is cysteine 200.

This sequence belongs to the TrhO family.

The enzyme catalyses uridine(34) in tRNA + AH2 + O2 = 5-hydroxyuridine(34) in tRNA + A + H2O. In terms of biological role, catalyzes oxygen-dependent 5-hydroxyuridine (ho5U) modification at position 34 in tRNAs, the first step in 5-carboxymethoxyuridine (cmo5U) biosynthesis. May be part of an alternate pathway, which is able to bypass cmo5U biogenesis in a subset of tRNAs under aerobic conditions. The protein is tRNA uridine(34) hydroxylase of Escherichia coli (strain SMS-3-5 / SECEC).